A 77-amino-acid polypeptide reads, in one-letter code: Neurexophilin-4 (77 aa).

The v (Cys-rich) stretch occupies residues 1-77; the sequence is NCHVEYEKTN…NFQSEHPYFG (77 aa).

Belongs to the neurexophilin family. Post-translationally, may be proteolytically processed at the boundary between the N-terminal non-conserved and the central conserved domain in neuron-like cells.

Its subcellular location is the secreted. Its function is as follows. May be signaling molecules that resemble neuropeptides and that act by binding to alpha-neurexins and possibly other receptors. In Macaca mulatta (Rhesus macaque), this protein is Neurexophilin-4 (NXPH4).